The chain runs to 263 residues: Insulin-like growth factor-binding protein 1 (263 aa).

The signal sequence occupies residues 1–25 (MPEVLAVRAWPLLLSLAVQLGATVG). The IGFBP N-terminal domain occupies 28-109 (QPWRCAPCSA…TRGQGACMTT (82 aa)). 6 disulfide bridges follow: Cys-32-Cys-59, Cys-35-Cys-61, Cys-43-Cys-62, Cys-50-Cys-65, Cys-73-Cys-86, and Cys-80-Cys-106. Positions 102–131 (GQGACMTTPSDEATDTKDTTSPENVSPESS) are disordered. Ser-122, Ser-127, Ser-130, Ser-148, and Ser-160 each carry phosphoserine. Residues 122–131 (SPENVSPESS) show a composition bias toward polar residues. The residue at position 162 (Tyr-162) is a Phosphotyrosine. In terms of domain architecture, Thyroglobulin type-1 spans 177–255 (KEPCQRELYK…SVAVRGDPKC (79 aa)). 3 disulfide bridges follow: Cys-180–Cys-210, Cys-221–Cys-232, and Cys-234–Cys-255. Ser-246 is modified (phosphoserine). The Cell attachment site signature appears at 250 to 252 (RGD).

Binds equally well IGF1 and IGF2. Interacts with integrin ITGA5:ITGB1. Interacts with VHL; this interaction inhibits HIF1A degradation.

It is found in the secreted. Its function is as follows. Multifunctional protein that plays a critical role in regulating the availability of IGFs such as IGF1 and IGF2 to their receptors and thereby regulates IGF-mediated cellular processes including cell migration, proliferation, differentiation or apoptosis in a cell-type specific manner. Also plays a positive role in cell migration by interacting with integrin ITGA5:ITGB1 through its RGD motif. Mechanistically, binding to integrins leads to activation of focal adhesion kinase/PTK2 and stimulation of the mitogen-activated protein kinase (MAPK) pathway. Regulates cardiomyocyte apoptosis by suppressing HIF-1alpha/HIF1A degradation through ubiquitination. The chain is Insulin-like growth factor-binding protein 1 (IGFBP1) from Bos taurus (Bovine).